A 505-amino-acid chain; its full sequence is ATP synthase subunit alpha (505 aa).

An ATP-binding site is contributed by 169 to 176 (GDRQIGKT).

This sequence belongs to the ATPase alpha/beta chains family. F-type ATPases have 2 components, CF(1) - the catalytic core - and CF(0) - the membrane proton channel. CF(1) has five subunits: alpha(3), beta(3), gamma(1), delta(1), epsilon(1). CF(0) has three main subunits: a(1), b(2) and c(9-12). The alpha and beta chains form an alternating ring which encloses part of the gamma chain. CF(1) is attached to CF(0) by a central stalk formed by the gamma and epsilon chains, while a peripheral stalk is formed by the delta and b chains.

The protein localises to the cell inner membrane. The enzyme catalyses ATP + H2O + 4 H(+)(in) = ADP + phosphate + 5 H(+)(out). Functionally, produces ATP from ADP in the presence of a proton gradient across the membrane. The alpha chain is a regulatory subunit. The polypeptide is ATP synthase subunit alpha (Desulfosudis oleivorans (strain DSM 6200 / JCM 39069 / Hxd3) (Desulfococcus oleovorans)).